Reading from the N-terminus, the 594-residue chain is UvrABC system protein C (594 aa).

The GIY-YIG domain maps to Asp-14 to Ile-91. In terms of domain architecture, UVR spans Lys-196 to Ile-231.

The protein belongs to the UvrC family. Interacts with UvrB in an incision complex.

It is found in the cytoplasm. Functionally, the UvrABC repair system catalyzes the recognition and processing of DNA lesions. UvrC both incises the 5' and 3' sides of the lesion. The N-terminal half is responsible for the 3' incision and the C-terminal half is responsible for the 5' incision. This is UvrABC system protein C from Bacillus cereus (strain Q1).